Reading from the N-terminus, the 430-residue chain is Asparagine--tRNA ligase (430 aa).

It belongs to the class-II aminoacyl-tRNA synthetase family. As to quaternary structure, homodimer.

It localises to the cytoplasm. It carries out the reaction tRNA(Asn) + L-asparagine + ATP = L-asparaginyl-tRNA(Asn) + AMP + diphosphate + H(+). The polypeptide is Asparagine--tRNA ligase (Staphylococcus aureus (strain bovine RF122 / ET3-1)).